The sequence spans 254 residues: Probable phosphatase TTE1963 (254 aa).

Residues histidine 14, histidine 16, histidine 22, histidine 47, glutamate 80, histidine 108, histidine 139, aspartate 200, and histidine 202 each coordinate Zn(2+).

The protein belongs to the PHP family. The cofactor is Zn(2+).

This chain is Probable phosphatase TTE1963, found in Caldanaerobacter subterraneus subsp. tengcongensis (strain DSM 15242 / JCM 11007 / NBRC 100824 / MB4) (Thermoanaerobacter tengcongensis).